We begin with the raw amino-acid sequence, 373 residues long: 3-dehydroquinate synthase (373 aa).

Residues 67–72 (EGEQAK), 101–105 (GVVLD), 125–126 (TT), K138, and K147 contribute to the NAD(+) site. E180, H240, and H256 together coordinate Zn(2+).

Belongs to the sugar phosphate cyclases superfamily. Dehydroquinate synthase family. It depends on NAD(+) as a cofactor. Requires Co(2+) as cofactor. The cofactor is Zn(2+).

Its subcellular location is the cytoplasm. The enzyme catalyses 7-phospho-2-dehydro-3-deoxy-D-arabino-heptonate = 3-dehydroquinate + phosphate. It participates in metabolic intermediate biosynthesis; chorismate biosynthesis; chorismate from D-erythrose 4-phosphate and phosphoenolpyruvate: step 2/7. Catalyzes the conversion of 3-deoxy-D-arabino-heptulosonate 7-phosphate (DAHP) to dehydroquinate (DHQ). The sequence is that of 3-dehydroquinate synthase (aroB) from Chlamydia muridarum (strain MoPn / Nigg).